The sequence spans 201 residues: Orotidine 5'-phosphate decarboxylase (201 aa).

Substrate-binding positions include Asp-8, Lys-26, Asp-52–Thr-61, Thr-106, Arg-153, Gln-161, Gly-180, and Arg-181. The Proton donor role is filled by Lys-54.

The protein belongs to the OMP decarboxylase family. Type 1 subfamily. As to quaternary structure, homodimer.

It catalyses the reaction orotidine 5'-phosphate + H(+) = UMP + CO2. Its pathway is pyrimidine metabolism; UMP biosynthesis via de novo pathway; UMP from orotate: step 2/2. Its function is as follows. Catalyzes the decarboxylation of orotidine 5'-monophosphate (OMP) to uridine 5'-monophosphate (UMP). This is Orotidine 5'-phosphate decarboxylase (pyrF) from Thermotoga maritima (strain ATCC 43589 / DSM 3109 / JCM 10099 / NBRC 100826 / MSB8).